The following is a 311-amino-acid chain: tRNA dimethylallyltransferase 2 (311 aa).

15–22 (GPTAVGKT) serves as a coordination point for ATP. 17–22 (TAVGKT) contributes to the substrate binding site. The interval 40 to 43 (DSMQ) is interaction with substrate tRNA.

The protein belongs to the IPP transferase family. As to quaternary structure, monomer. The cofactor is Mg(2+).

It catalyses the reaction adenosine(37) in tRNA + dimethylallyl diphosphate = N(6)-dimethylallyladenosine(37) in tRNA + diphosphate. In terms of biological role, catalyzes the transfer of a dimethylallyl group onto the adenine at position 37 in tRNAs that read codons beginning with uridine, leading to the formation of N6-(dimethylallyl)adenosine (i(6)A). The polypeptide is tRNA dimethylallyltransferase 2 (Syntrophus aciditrophicus (strain SB)).